Here is a 190-residue protein sequence, read N- to C-terminus: MAENYTPRLKSRYQDEIRPNLQTQFEFSNVMQIPGVTKVVVNMGVGDAARDSKMINGALEDLTAITGQKPQLRRAKKSIANFKLREGMPIGAKVTLRGDRMWEFLDRLLTVALPRIRDFRGLSDQQFDGHGNYTFGLTEQTMFYEIDVDKIDRPRGMDITVVTTAVTDDEGRALLRELGFPFKGEDGKKQ.

This sequence belongs to the universal ribosomal protein uL5 family. Part of the 50S ribosomal subunit; part of the 5S rRNA/L5/L18/L25 subcomplex. Contacts the 5S rRNA and the P site tRNA. Forms a bridge to the 30S subunit in the 70S ribosome.

Its function is as follows. This is one of the proteins that bind and probably mediate the attachment of the 5S RNA into the large ribosomal subunit, where it forms part of the central protuberance. In the 70S ribosome it contacts protein S13 of the 30S subunit (bridge B1b), connecting the 2 subunits; this bridge is implicated in subunit movement. Contacts the P site tRNA; the 5S rRNA and some of its associated proteins might help stabilize positioning of ribosome-bound tRNAs. The polypeptide is Large ribosomal subunit protein uL5 (Corynebacterium efficiens (strain DSM 44549 / YS-314 / AJ 12310 / JCM 11189 / NBRC 100395)).